Consider the following 134-residue polypeptide: Early E3B 14.5 kDa protein (134 aa).

Positions 1–21 are cleaved as a signal peptide; the sequence is MQAMLPVILILLLPCIPLAST. Residues 54 to 78 form a helical membrane-spanning segment; it reads YWIVIVGIINILSCTFFSITIYPTF.

The protein belongs to the adenoviridae E3_14 family. Post-translationally, phosphorylated on serine; O-glycosylated, but not N-glycosylated.

The protein resides in the host membrane. Functionally, down-regulates the EGF receptor and prevents cytolysis by TNF. The chain is Early E3B 14.5 kDa protein from Homo sapiens (Human).